Reading from the N-terminus, the 591-residue chain is MSERLMAGRLNEKNIGEKVLLKGWVQKRRDLGGLIFIDLRDKSGLIQVVFNPDHSKKALETAENIRSEYVIEINGTVVARDEATINPSMKTGKIEVNASSVQILNKAKTPPFTIQDETDVSEDVRLKYRYLDLRRNSLQETFRLRHQTTQSIRNYLNDKDFLEMETPILTKSTPEGARDYLVPSRVHPGEFYALPQSPQLFKQLIMMGGFERYYQIARCFRDEDLRADRQPEFTQIDIETSFLTSDEIMDMTEHMMKKVMKEVKDIDISLPLPRMPYQEAMDRYGSDKPDTRFDLELIHVSDIVASSGFKVFSQAVDNGGKVALLNIKGKADNYSRKDIDKLTEYVKVYDAKGLAWLKADESELKGPIAKFLSEEEVAGIRDRANVEQGDLLLFVADKTNVVYDSLGALRLYLGKELGLIDESKFHFLWVTDWPLLEYDEGLGRYFAAHHPFTSAIEEDLDKLETDPASVRANAYDLVLNGFELGGGSIRIHQKEQQDQMFKVLGFSEEEARSQFGFLLDALEYGAPPHGGIALGLDRIIMLLAGRSNLRDTILFPKTASASDLMTAAPSGVSDDQLQELSIQLQSGEKNQ.

Glutamate 175 lines the L-aspartate pocket. The tract at residues 199–202 (QLFK) is aspartate. Residue arginine 221 coordinates L-aspartate. Residues 221–223 (RDE) and glutamine 230 each bind ATP. Histidine 449 contacts L-aspartate. Glutamate 483 contacts ATP. Arginine 490 provides a ligand contact to L-aspartate. Position 535–538 (535–538 (GLDR)) interacts with ATP.

Belongs to the class-II aminoacyl-tRNA synthetase family. Type 1 subfamily. Homodimer.

It is found in the cytoplasm. The catalysed reaction is tRNA(Asp) + L-aspartate + ATP = L-aspartyl-tRNA(Asp) + AMP + diphosphate. Catalyzes the attachment of L-aspartate to tRNA(Asp) in a two-step reaction: L-aspartate is first activated by ATP to form Asp-AMP and then transferred to the acceptor end of tRNA(Asp). In Oceanobacillus iheyensis (strain DSM 14371 / CIP 107618 / JCM 11309 / KCTC 3954 / HTE831), this protein is Aspartate--tRNA ligase.